We begin with the raw amino-acid sequence, 182 residues long: Ribosome maturation factor RimM (182 aa).

Residues 103–182 (EDEFYWRELF…RIEVDWDPGF (80 aa)) enclose the PRC barrel domain.

Belongs to the RimM family. In terms of assembly, binds ribosomal protein uS19.

It localises to the cytoplasm. An accessory protein needed during the final step in the assembly of 30S ribosomal subunit, possibly for assembly of the head region. Essential for efficient processing of 16S rRNA. May be needed both before and after RbfA during the maturation of 16S rRNA. It has affinity for free ribosomal 30S subunits but not for 70S ribosomes. The protein is Ribosome maturation factor RimM of Vibrio vulnificus (strain CMCP6).